Here is an 838-residue protein sequence, read N- to C-terminus: Translation initiation factor IF-2 (838 aa).

The tract at residues 50 to 108 is disordered; it reads VQSGKKPESPEKKDIKQNTQKEAPETQTQQKPIEQEVETKQNIDSTPIKVEPKQESLAS. A compositionally biased stretch (basic and acidic residues) spans 54-65; sequence KKPESPEKKDIK. Residues 66–81 are compositionally biased toward polar residues; it reads QNTQKEAPETQTQQKP. The 170-residue stretch at 337–506 folds into the tr-type G domain; sequence SRAPVVTIMG…LLQAELLELK (170 aa). A G1 region spans residues 346–353; the sequence is GHVDHGKT. 346-353 is a binding site for GTP; it reads GHVDHGKT. The tract at residues 371-375 is G2; that stretch reads GITQH. The tract at residues 392-395 is G3; it reads DTPG. GTP is bound by residues 392–396 and 446–449; these read DTPGH and NKMD. The interval 446–449 is G4; it reads NKMD. Positions 482 to 484 are G5; sequence SAK.

It belongs to the TRAFAC class translation factor GTPase superfamily. Classic translation factor GTPase family. IF-2 subfamily.

The protein resides in the cytoplasm. Its function is as follows. One of the essential components for the initiation of protein synthesis. Protects formylmethionyl-tRNA from spontaneous hydrolysis and promotes its binding to the 30S ribosomal subunits. Also involved in the hydrolysis of GTP during the formation of the 70S ribosomal complex. The polypeptide is Translation initiation factor IF-2 (Campylobacter fetus subsp. fetus (strain 82-40)).